Consider the following 129-residue polypeptide: MAKKTRRVVKRKKKLTVDRGVVHIKSTYNNTIITLTDPDGKVITWGSGGTAGFQGTRKGTPYAAQLAADQVAKEAVKLGMKKVDILVKGPGSGREAAIRTFQAAGLEIGVIKDVTPIPFNGCRPKKKRV.

It belongs to the universal ribosomal protein uS11 family. In terms of assembly, part of the 30S ribosomal subunit. Interacts with proteins S7 and S18. Binds to IF-3.

In terms of biological role, located on the platform of the 30S subunit, it bridges several disparate RNA helices of the 16S rRNA. Forms part of the Shine-Dalgarno cleft in the 70S ribosome. The polypeptide is Small ribosomal subunit protein uS11 (Thermosipho africanus (strain TCF52B)).